A 189-amino-acid polypeptide reads, in one-letter code: UPF0149 protein VF_2102 (189 aa).

This sequence belongs to the UPF0149 family.

This is UPF0149 protein VF_2102 from Aliivibrio fischeri (strain ATCC 700601 / ES114) (Vibrio fischeri).